Consider the following 239-residue polypeptide: Thymidylate kinase (239 aa).

10–17 (GVNRVGKS) serves as a coordination point for ATP.

Belongs to the thymidylate kinase family.

The catalysed reaction is dTMP + ATP = dTDP + ADP. It functions in the pathway pyrimidine metabolism; dTTP biosynthesis. Its function is as follows. Catalyzes the conversion of dTMP to dTDP. In African swine fever virus (isolate Tick/South Africa/Pretoriuskop Pr4/1996) (ASFV), this protein is Thymidylate kinase (TMK).